The following is a 443-amino-acid chain: COP9 signalosome complex subunit 2 (443 aa).

A PCI domain is found at 254-416; sequence AHTDFFEAFK…QLLELDHQKR (163 aa).

It belongs to the CSN2 family. Component of the CSN complex, probably composed of cops1, cops2, cops3, cops4, cops5, cops6, cops7, cops8 and cops9.

Its subcellular location is the cytoplasm. It is found in the nucleus. In terms of biological role, essential component of the COP9 signalosome complex (CSN), a complex involved in various cellular and developmental processes. The CSN complex is an essential regulator of the ubiquitin (Ubl) conjugation pathway by mediating the deneddylation of the cullin subunits of E3 ligase complexes, leading to modify the Ubl ligase activity. This is COP9 signalosome complex subunit 2 (cops2) from Danio rerio (Zebrafish).